The chain runs to 338 residues: D-erythrose-4-phosphate dehydrogenase (338 aa).

12–13 (RI) is an NAD(+) binding site. Substrate is bound by residues 154–156 (SCT), Arg-200, 213–214 (TK), and Arg-236. The active-site Nucleophile is the Cys-155. Asn-318 serves as a coordination point for NAD(+).

It belongs to the glyceraldehyde-3-phosphate dehydrogenase family. Epd subfamily. In terms of assembly, homotetramer.

Its subcellular location is the cytoplasm. It carries out the reaction D-erythrose 4-phosphate + NAD(+) + H2O = 4-phospho-D-erythronate + NADH + 2 H(+). It participates in cofactor biosynthesis; pyridoxine 5'-phosphate biosynthesis; pyridoxine 5'-phosphate from D-erythrose 4-phosphate: step 1/5. Functionally, catalyzes the NAD-dependent conversion of D-erythrose 4-phosphate to 4-phosphoerythronate. The protein is D-erythrose-4-phosphate dehydrogenase of Yersinia enterocolitica serotype O:8 / biotype 1B (strain NCTC 13174 / 8081).